A 120-amino-acid chain; its full sequence is Large ribosomal subunit protein uL24 (120 aa).

Belongs to the universal ribosomal protein uL24 family. Part of the 50S ribosomal subunit.

Its function is as follows. One of two assembly initiator proteins, it binds directly to the 5'-end of the 23S rRNA, where it nucleates assembly of the 50S subunit. One of the proteins that surrounds the polypeptide exit tunnel on the outside of the subunit. The chain is Large ribosomal subunit protein uL24 from Pseudarthrobacter chlorophenolicus (strain ATCC 700700 / DSM 12829 / CIP 107037 / JCM 12360 / KCTC 9906 / NCIMB 13794 / A6) (Arthrobacter chlorophenolicus).